The chain runs to 256 residues: Pimeloyl-[acyl-carrier protein] methyl ester esterase (256 aa).

The region spanning 15–242 (HLVLLHGWGL…AAHAPFISHP (228 aa)) is the AB hydrolase-1 domain. Substrate is bound by residues tryptophan 22, 82–83 (SL), and 143–147 (FLALQ). The active-site Nucleophile is the serine 82. Catalysis depends on residues aspartate 207 and histidine 235. Substrate is bound at residue histidine 235.

It belongs to the AB hydrolase superfamily. Carboxylesterase BioH family. In terms of assembly, monomer.

It is found in the cytoplasm. The catalysed reaction is 6-carboxyhexanoyl-[ACP] methyl ester + H2O = 6-carboxyhexanoyl-[ACP] + methanol + H(+). It participates in cofactor biosynthesis; biotin biosynthesis. Its function is as follows. The physiological role of BioH is to remove the methyl group introduced by BioC when the pimeloyl moiety is complete. It allows to synthesize pimeloyl-ACP via the fatty acid synthetic pathway through the hydrolysis of the ester bonds of pimeloyl-ACP esters. This chain is Pimeloyl-[acyl-carrier protein] methyl ester esterase, found in Salmonella newport (strain SL254).